The primary structure comprises 264 residues: MRFKELIFPLRVEEEEIVEKFYEEGFFNFAIEEDEKGKRVLKIYLREGEPLPDFLKDWEIVDEKITTPKDWIVELEPFEIVEGVFVDPTEKINRRDAIVIKLSPGVAFGTGLHPTTRMSVFFLKKYLKEGNTVLDVGCGTGILAIAAKKLGASQVVAVDVDEQAVEVAEENVRKNDVDVLVKWSDLLSEVEGTFDIVVSNILAEIHVKLLEDVNRVTHRDSMLILSGIVDKKEDMVKRKASEHGWNVLERKQEREWVTLVMKRS.

Residues threonine 116, glycine 137, aspartate 159, and asparagine 200 each coordinate S-adenosyl-L-methionine.

This sequence belongs to the methyltransferase superfamily. PrmA family.

It is found in the cytoplasm. The enzyme catalyses L-lysyl-[protein] + 3 S-adenosyl-L-methionine = N(6),N(6),N(6)-trimethyl-L-lysyl-[protein] + 3 S-adenosyl-L-homocysteine + 3 H(+). In terms of biological role, methylates ribosomal protein L11. The polypeptide is Ribosomal protein L11 methyltransferase (Thermotoga petrophila (strain ATCC BAA-488 / DSM 13995 / JCM 10881 / RKU-1)).